A 327-amino-acid polypeptide reads, in one-letter code: Phenylalanine--tRNA ligase alpha subunit (327 aa).

Position 252 (E252) interacts with Mg(2+).

It belongs to the class-II aminoacyl-tRNA synthetase family. Phe-tRNA synthetase alpha subunit type 1 subfamily. As to quaternary structure, tetramer of two alpha and two beta subunits. Requires Mg(2+) as cofactor.

Its subcellular location is the cytoplasm. The catalysed reaction is tRNA(Phe) + L-phenylalanine + ATP = L-phenylalanyl-tRNA(Phe) + AMP + diphosphate + H(+). This is Phenylalanine--tRNA ligase alpha subunit from Yersinia enterocolitica serotype O:8 / biotype 1B (strain NCTC 13174 / 8081).